We begin with the raw amino-acid sequence, 735 residues long: Exocyst complex component 7 (735 aa).

Coiled coils occupy residues 5 to 42 (QEASARRREIEDKLKQEEETLSFIRDSLEKSDQLTKNM) and 63 to 85 (VHKQTENLQRLQENVEKTLSCLD). A Phosphoserine modification is found at Ser133. The disordered stretch occupies residues 239–268 (HKSSSSSGVPYSPAIPNKRKDTPTKKPVKR).

Belongs to the EXO70 family. The exocyst complex is composed of EXOC1, EXOC2, EXOC3, EXOC4, EXOC5, EXOC6, EXOC7 and EXOC8. Interacts with ARHQ in a GTP-dependent manner. Interacts with RAB11FIP3. As to expression, abundant in the ventricular zone, the outer subventricular zone and the cortical plate of the fetal cortex.

Its subcellular location is the cytoplasm. The protein resides in the cytosol. It is found in the cell membrane. The protein localises to the midbody. It localises to the midbody ring. Component of the exocyst complex involved in the docking of exocytic vesicles with fusion sites on the plasma membrane. In adipocytes, plays a crucial role in targeting SLC2A4 vesicle to the plasma membrane in response to insulin, perhaps directing the vesicle to the precise site of fusion. It is required for neuron survival and plays an essential role in cortical development. This is Exocyst complex component 7 (EXOC7) from Homo sapiens (Human).